The primary structure comprises 159 residues: Transcriptional repressor NrdR (159 aa).

A zinc finger lies at 3 to 34 (CPFCRHEDTQVVDSRVSEDGAAIRRRRRCSAC). Residues 49–139 (PAVVKKDGSR…VYRRFEDVSE (91 aa)) form the ATP-cone domain.

The protein belongs to the NrdR family. Requires Zn(2+) as cofactor.

Its function is as follows. Negatively regulates transcription of bacterial ribonucleotide reductase nrd genes and operons by binding to NrdR-boxes. The sequence is that of Transcriptional repressor NrdR from Burkholderia multivorans (strain ATCC 17616 / 249).